The sequence spans 211 residues: Adenylate kinase (211 aa).

An ATP-binding site is contributed by 10-15 (GSGKGT). Residues 30–59 (STGDLFRENILNSTTLGKEIKKIVEKGELV) are NMP. AMP-binding positions include Thr31, Arg36, 57-59 (ELV), 85-88 (GFPR), and Gln92. The LID stretch occupies residues 121-158 (GRRICKSCNNIFNIYTLATKKNGICDVCKGDLYQREDD). Arg122 is a binding site for ATP. Cys125 and Cys128 together coordinate Zn(2+). Position 131 to 132 (131 to 132 (IF)) interacts with ATP. Zn(2+)-binding residues include Cys145 and Cys148. Arg155 and Arg166 together coordinate AMP. Residue Val194 coordinates ATP.

This sequence belongs to the adenylate kinase family. Monomer.

It localises to the cytoplasm. It catalyses the reaction AMP + ATP = 2 ADP. Its pathway is purine metabolism; AMP biosynthesis via salvage pathway; AMP from ADP: step 1/1. Its function is as follows. Catalyzes the reversible transfer of the terminal phosphate group between ATP and AMP. Plays an important role in cellular energy homeostasis and in adenine nucleotide metabolism. In Borrelia garinii subsp. bavariensis (strain ATCC BAA-2496 / DSM 23469 / PBi) (Borreliella bavariensis), this protein is Adenylate kinase.